Consider the following 414-residue polypeptide: MSKKISGGSVVEMQGDEMTRIIWELIKEKLIFPYVELDLHSYDLGIENRDATNDQVTKDAAEAIKKHNVGVKCATITPDEKRVEEFKLKQMWKSPNGTIRNILGGTVFREAIICKNIPRLVSGWVKPIIIGRHAYGDQYRATDFVVPGPGKVEITYTPSDGTQKVTYLVHNFEEGGGVAMGMYNQDKSIEDFAHSSFQMALSKGWPLYLSTKNTILKKYDGRFKDIFQEIYDKQYKSQFEAQKIWYEHRLIDDMVAQAMKSEGGFIWACKNYDGDVQSDSVAQGYGSLGMMTSVLVCPDGKTVEAEAAHGTVTRHYRMYQKGQETSTNPIASIFAWTRGLAHRAKLDNNKELAFFANALEEVSIETIEAGFMTKDLAACIKGLPNVQRSDYLNTFEFMDKLGENLKIKLAQAKL.

The residue at position 2 (Ser-2) is an N-acetylserine. Tyr-42 bears the Phosphotyrosine mark. 75–77 serves as a coordination point for NADP(+); it reads TIT. Position 77 (Thr-77) interacts with substrate. The residue at position 81 (Lys-81) is an N6-acetyllysine. Arg-82 is an NADP(+) binding site. Substrate is bound by residues 94-100 and Arg-109; that span reads SPNGTIR. Residue Lys-126 is modified to N6-succinyllysine. 2 residues coordinate substrate: Arg-132 and Lys-212. An N6-acetyllysine mark is found at Lys-224, Lys-233, and Lys-243. Asp-252 is a binding site for Mn(2+). Position 260 (Lys-260) interacts with NADP(+). Positions 275 and 279 each coordinate Mn(2+). 310–315 lines the NADP(+) pocket; sequence GTVTRH. Lys-321 bears the N6-acetyllysine mark. Residue Asn-328 coordinates NADP(+). Ser-389 bears the Phosphoserine mark. Residue Lys-400 is modified to N6-succinyllysine.

Belongs to the isocitrate and isopropylmalate dehydrogenases family. As to quaternary structure, homodimer. Requires Mg(2+) as cofactor. The cofactor is Mn(2+). Post-translationally, acetylation at Lys-374 dramatically reduces catalytic activity.

It localises to the cytoplasm. The protein localises to the cytosol. The protein resides in the peroxisome. It catalyses the reaction D-threo-isocitrate + NADP(+) = 2-oxoglutarate + CO2 + NADPH. Catalyzes the NADP(+)-dependent oxidative decarboxylation of isocitrate (D-threo-isocitrate) to 2-ketoglutarate (2-oxoglutarate), which is required by other enzymes such as the phytanoyl-CoA dioxygenase. Plays a critical role in the generation of NADPH, an important cofactor in many biosynthesis pathways. May act as a corneal epithelial crystallin and may be involved in maintaining corneal epithelial transparency. This Homo sapiens (Human) protein is Isocitrate dehydrogenase [NADP] cytoplasmic (IDH1).